The primary structure comprises 242 residues: Outer membrane protein class 4 (242 aa).

The signal sequence occupies residues 1–22; that stretch reads MTKQLKLSALFVALLASGTAVA. A run of 7 repeats spans residues 69 to 70, 71 to 72, 73 to 74, 75 to 76, 77 to 78, 79 to 80, and 81 to 82. The 7 X 2 AA tandem repeats of X-P stretch occupies residues 69-82; that stretch reads APEPEPEPEPAPAP. An OmpA-like domain is found at 92-229; it reads YVDETISLSA…RVDVKIRSIV (138 aa). An intrachain disulfide couples C191 to C214.

It belongs to the outer membrane OOP (TC 1.B.6) superfamily. As to quaternary structure, the C-terminus exists in a monomer-dimer equilibrium.

The protein localises to the cell outer membrane. This is Outer membrane protein class 4 from Neisseria meningitidis serogroup B (strain ATCC BAA-335 / MC58).